The chain runs to 611 residues: L-tyrosine decarboxylase (611 aa).

Pyridoxal 5'-phosphate is bound by residues 151 to 152, threonine 292, and 382 to 384; these read GS and DPH. Lysine 385 is modified (N6-(pyridoxal phosphate)lysine). The Proton donor role is filled by tyrosine 413. Serine 433 contributes to the pyridoxal 5'-phosphate binding site.

The protein belongs to the group II decarboxylase family. Tyrosine decarboxylase subfamily. As to quaternary structure, homodimer. Pyridoxal 5'-phosphate serves as cofactor.

It catalyses the reaction L-tyrosine + H(+) = tyramine + CO2. It carries out the reaction L-dopa + H(+) = dopamine + CO2. Its pathway is amino-acid metabolism. Its activity is regulated as follows. Levodopa decarboxylation is not inhibited by carbidopa, benserazide, and methyldopa, that are three human L-dopa decarboxylase inhibitors. Catalyzes the decarboxylation of L-tyrosine to produce tyramine. Plays a role in acid resistance since tyramine production via tyrosine decarboxylation appears to provide a cytosolic pH maintenance mechanism that helps the bacterium cope with acid stress such as that encountered in gastrointestinal tract (GIT) environments. Therefore, may contribute to the colonization of the human GIT by E.faecium. Its function is as follows. Also involved in drug metabolism, being able to catalyze decarboxylation of levodopa (L-dopa) to dopamine. In gut microbiota this enzyme is in fact exclusively responsible for the decarboxylation of levodopa, and thus reduces in situ levels of levodopa in the treatment of Parkinson's disease. It was shown that abundance of bacterial tyrosine decarboxylase in the proximal small intestine - the primary site of levodopa absorption - contributes to interindividual variation in drug efficacy and can explain the requirement for an increased dosage regimen of levodopa treatment in Parkinson's disease patients. In Enterococcus faecium (Streptococcus faecium), this protein is L-tyrosine decarboxylase.